Reading from the N-terminus, the 257-residue chain is NAD-capped RNA hydrolase NudC (257 aa).

Arginine 69 contacts substrate. 2 residues coordinate Zn(2+): cysteine 98 and cysteine 101. Glutamate 111 lines the substrate pocket. Residues cysteine 116 and cysteine 119 each contribute to the Zn(2+) site. Tyrosine 124 serves as a coordination point for substrate. Positions 125–248 (PQIAPCIIVA…TVARRLIEDT (124 aa)) constitute a Nudix hydrolase domain. Residues alanine 158, glutamate 174, and glutamate 178 each coordinate a divalent metal cation. The Nudix box motif lies at 159 to 180 (GFVEVGETLEQAVAREVMEESG). 192 to 199 (QPWPFPQS) lines the substrate pocket. Glutamate 219 provides a ligand contact to a divalent metal cation. Alanine 241 provides a ligand contact to substrate.

The protein belongs to the Nudix hydrolase family. NudC subfamily. In terms of assembly, homodimer. It depends on Mg(2+) as a cofactor. Mn(2+) is required as a cofactor. Zn(2+) serves as cofactor.

It catalyses the reaction a 5'-end NAD(+)-phospho-ribonucleoside in mRNA + H2O = a 5'-end phospho-adenosine-phospho-ribonucleoside in mRNA + beta-nicotinamide D-ribonucleotide + 2 H(+). The enzyme catalyses NAD(+) + H2O = beta-nicotinamide D-ribonucleotide + AMP + 2 H(+). The catalysed reaction is NADH + H2O = reduced beta-nicotinamide D-ribonucleotide + AMP + 2 H(+). Its function is as follows. mRNA decapping enzyme that specifically removes the nicotinamide adenine dinucleotide (NAD) cap from a subset of mRNAs by hydrolyzing the diphosphate linkage to produce nicotinamide mononucleotide (NMN) and 5' monophosphate mRNA. The NAD-cap is present at the 5'-end of some mRNAs and stabilizes RNA against 5'-processing. Has preference for mRNAs with a 5'-end purine. Catalyzes the hydrolysis of a broad range of dinucleotide pyrophosphates. This is NAD-capped RNA hydrolase NudC from Salmonella choleraesuis (strain SC-B67).